The following is a 161-amino-acid chain: uncharacterized protein (161 aa).

Disordered stretches follow at residues Lys47–Asn83 and Arg104–Tyr137. Over residues Lys50 to Asn64 the composition is skewed to basic residues. Low complexity-rich tracts occupy residues Asn73–Asn83 and Ser115–Asn130.

This is an uncharacterized protein from Dictyostelium discoideum (Social amoeba).